Here is a 307-residue protein sequence, read N- to C-terminus: 4-diphosphocytidyl-2-C-methyl-D-erythritol kinase (307 aa).

Lys9 is an active-site residue. 94–104 (PIGAGLAGGSS) is a binding site for ATP. The active site involves Asp136.

The protein belongs to the GHMP kinase family. IspE subfamily.

The enzyme catalyses 4-CDP-2-C-methyl-D-erythritol + ATP = 4-CDP-2-C-methyl-D-erythritol 2-phosphate + ADP + H(+). Its pathway is isoprenoid biosynthesis; isopentenyl diphosphate biosynthesis via DXP pathway; isopentenyl diphosphate from 1-deoxy-D-xylulose 5-phosphate: step 3/6. Catalyzes the phosphorylation of the position 2 hydroxy group of 4-diphosphocytidyl-2C-methyl-D-erythritol. The polypeptide is 4-diphosphocytidyl-2-C-methyl-D-erythritol kinase (Synechococcus sp. (strain CC9902)).